Consider the following 730-residue polypeptide: Translation initiation factor IF-2 (730 aa).

The segment at 48–151 (GNGNQKQGGS…NKAKPLPEKV (104 aa)) is disordered. Basic and acidic residues-rich tracts occupy residues 61 to 77 (EQQK…DHGQ) and 89 to 104 (NQHD…KGKA). Positions 110–123 (KPKHKGNKNKKQHQ) are enriched in basic residues. A compositionally biased stretch (basic and acidic residues) spans 137–148 (RQPEMNKAKPLP). Residues 231 to 400 (ERPPVVTIMG…LLVAEVEELK (170 aa)) enclose the tr-type G domain. The tract at residues 240–247 (GHVDHGKT) is G1. Position 240-247 (240-247 (GHVDHGKT)) interacts with GTP. The tract at residues 265–269 (GITQH) is G2. Residues 286-289 (DTPG) form a G3 region. GTP contacts are provided by residues 286 to 290 (DTPGH) and 340 to 343 (NKMD). Residues 340–343 (NKMD) form a G4 region. Positions 376-378 (SAL) are G5.

The protein belongs to the TRAFAC class translation factor GTPase superfamily. Classic translation factor GTPase family. IF-2 subfamily.

The protein resides in the cytoplasm. In terms of biological role, one of the essential components for the initiation of protein synthesis. Protects formylmethionyl-tRNA from spontaneous hydrolysis and promotes its binding to the 30S ribosomal subunits. Also involved in the hydrolysis of GTP during the formation of the 70S ribosomal complex. This Halalkalibacterium halodurans (strain ATCC BAA-125 / DSM 18197 / FERM 7344 / JCM 9153 / C-125) (Bacillus halodurans) protein is Translation initiation factor IF-2.